We begin with the raw amino-acid sequence, 863 residues long: DNA gyrase subunit A (863 aa).

A Topo IIA-type catalytic domain is found at 37 to 500 (LPDARDGLKP…DYDDIDIEDL (464 aa)). Residue Tyr-125 is the O-(5'-phospho-DNA)-tyrosine intermediate of the active site. Residues 527 to 533 (QKRGGKG) carry the GyrA-box motif.

It belongs to the type II topoisomerase GyrA/ParC subunit family. As to quaternary structure, heterotetramer, composed of two GyrA and two GyrB chains. In the heterotetramer, GyrA contains the active site tyrosine that forms a transient covalent intermediate with DNA, while GyrB binds cofactors and catalyzes ATP hydrolysis.

It localises to the cytoplasm. The enzyme catalyses ATP-dependent breakage, passage and rejoining of double-stranded DNA.. Functionally, a type II topoisomerase that negatively supercoils closed circular double-stranded (ds) DNA in an ATP-dependent manner to modulate DNA topology and maintain chromosomes in an underwound state. Negative supercoiling favors strand separation, and DNA replication, transcription, recombination and repair, all of which involve strand separation. Also able to catalyze the interconversion of other topological isomers of dsDNA rings, including catenanes and knotted rings. Type II topoisomerases break and join 2 DNA strands simultaneously in an ATP-dependent manner. The chain is DNA gyrase subunit A from Campylobacter jejuni subsp. jejuni serotype O:2 (strain ATCC 700819 / NCTC 11168).